The chain runs to 669 residues: DNA ligase (669 aa).

Residues 34–38 (DAEYD), 83–84 (SL), and Glu114 each bind NAD(+). Lys116 (N6-AMP-lysine intermediate) is an active-site residue. The NAD(+) site is built by Arg137, Glu171, Lys287, and Lys311. 4 residues coordinate Zn(2+): Cys405, Cys408, Cys423, and Cys428. The 79-residue stretch at 591–669 (NVESYFAGKT…EERFLQELNK (79 aa)) folds into the BRCT domain.

This sequence belongs to the NAD-dependent DNA ligase family. LigA subfamily. The cofactor is Mg(2+). Mn(2+) serves as cofactor.

It catalyses the reaction NAD(+) + (deoxyribonucleotide)n-3'-hydroxyl + 5'-phospho-(deoxyribonucleotide)m = (deoxyribonucleotide)n+m + AMP + beta-nicotinamide D-nucleotide.. In terms of biological role, DNA ligase that catalyzes the formation of phosphodiester linkages between 5'-phosphoryl and 3'-hydroxyl groups in double-stranded DNA using NAD as a coenzyme and as the energy source for the reaction. It is essential for DNA replication and repair of damaged DNA. The sequence is that of DNA ligase from Bacillus cereus (strain ATCC 14579 / DSM 31 / CCUG 7414 / JCM 2152 / NBRC 15305 / NCIMB 9373 / NCTC 2599 / NRRL B-3711).